Consider the following 756-residue polypeptide: 5-methyltetrahydropteroyltriglutamate--homocysteine methyltransferase (756 aa).

5-methyltetrahydropteroyltri-L-glutamate contacts are provided by residues 16-19 and Lys-112; that span reads RELK. Residues 432-434 and Glu-485 contribute to the L-homocysteine site; that span reads IGS. L-methionine contacts are provided by residues 432–434 and Glu-485; that span reads IGS. Residues 516–517 and Trp-562 each bind 5-methyltetrahydropteroyltri-L-glutamate; that span reads RC. L-homocysteine is bound at residue Asp-600. Asp-600 lines the L-methionine pocket. Position 606 (Glu-606) interacts with 5-methyltetrahydropteroyltri-L-glutamate. The Zn(2+) site is built by His-642, Cys-644, and Glu-666. His-695 (proton donor) is an active-site residue. Residue Cys-727 participates in Zn(2+) binding.

This sequence belongs to the vitamin-B12 independent methionine synthase family. The cofactor is Zn(2+).

The catalysed reaction is 5-methyltetrahydropteroyltri-L-glutamate + L-homocysteine = tetrahydropteroyltri-L-glutamate + L-methionine. Its pathway is amino-acid biosynthesis; L-methionine biosynthesis via de novo pathway; L-methionine from L-homocysteine (MetE route): step 1/1. Catalyzes the transfer of a methyl group from 5-methyltetrahydrofolate to homocysteine resulting in methionine formation. The sequence is that of 5-methyltetrahydropteroyltriglutamate--homocysteine methyltransferase from Haemophilus influenzae (strain ATCC 51907 / DSM 11121 / KW20 / Rd).